Reading from the N-terminus, the 556-residue chain is Set1/Ash2 histone methyltransferase complex subunit ASH2 (556 aa).

The span at 1 to 19 (MEDSQMDTSSPTESSSEVN) shows a compositional bias: polar residues. Residues 1–27 (MEDSQMDTSSPTESSSEVNFTAEEDKS) are disordered. The PHD-type zinc finger occupies 34 to 90 (AGVCYCGKERNLNIVELLCATCSRWVHETCVSYQLGKGKLLPFITNYVFVCKNCSAS). Residues Cys-37, Cys-39, Cys-52, Cys-55, His-60, Cys-63, Cys-84, and Cys-87 each contribute to the Zn(2+) site. Residues 216-251 (ASLSKNNRQKRKFPGTDSGPTGKKGRPSSDITANVK) are disordered. One can recognise a B30.2/SPRY domain in the interval 288–510 (SSDWAGKPIP…VSVNFGPAFK (223 aa)).

As to quaternary structure, core component of several methyltransferase-containing complexes. Component of the SET1C/COMPASS complex, composed at least of the catalytic subunit Set1, wds/WDR5, Wdr82, Rbbp5, ash2, Cfp1/CXXC1, hcf and Dpy-30L1. Component of the MLL3/4 (Histone-lysine N-methyltransferase/demethylase TRR) complex composed at least of the catalytic subunit trr, ash2, Rbbp5, Dpy-30L1, wds, hcf, ptip, Pa1, Utx, Lpt and Ncoa6. Interacts with hcf. Interacts with trr. In terms of assembly, interacts (via B30.2/SPRY domain) with sktl; the interaction is direct. In larvae and pupae, expressed in imaginal disks, salivary gland and fat body cells. No expression detected in central nervous system (at protein level).

It is found in the nucleus. The protein localises to the chromosome. Its function is as follows. Transcriptional regulator. Regulates a number of genes involved in wing development including activation of net and bs and repression of rho and kni and controls vein-intervein patterning during wing development. Required for correct expression of a number of homeotic genes including Scr in the first leg imaginal disk and Ubx in the third leg imaginal disk and haltere disks. Required for stabilization of the histone-lysine N-methyltransferase trr and for trimethylation of 'Lys-4' of histone H3. Together with sktl probably plays a role in maintenance of transcriptionally active chromatin through down-regulation of histone H1 hyperphosphorylation. This chain is Set1/Ash2 histone methyltransferase complex subunit ASH2, found in Drosophila melanogaster (Fruit fly).